Consider the following 117-residue polypeptide: Large ribosomal subunit protein bL20 (117 aa).

This sequence belongs to the bacterial ribosomal protein bL20 family.

Functionally, binds directly to 23S ribosomal RNA and is necessary for the in vitro assembly process of the 50S ribosomal subunit. It is not involved in the protein synthesizing functions of that subunit. In Magnetococcus marinus (strain ATCC BAA-1437 / JCM 17883 / MC-1), this protein is Large ribosomal subunit protein bL20.